Here is a 139-residue protein sequence, read N- to C-terminus: GATA transcription factor 16 (139 aa).

The segment at 32–86 (NDKKKTCADCGTSKTPLWRGGPVGPKSLCNACGIRNRKKRRGGTEDNKKLKKSSS) adopts a GATA-type zinc-finger fold. Residues 67–98 (NRKKRRGGTEDNKKLKKSSSGGGNRKFGESLK) are disordered.

It belongs to the type IV zinc-finger family. Class B subfamily.

It localises to the nucleus. Functionally, transcriptional regulator that specifically binds 5'-GATA-3' or 5'-GAT-3' motifs within gene promoters. This is GATA transcription factor 16 (GATA16) from Arabidopsis thaliana (Mouse-ear cress).